A 444-amino-acid polypeptide reads, in one-letter code: Tol-Pal system protein TolB (444 aa).

The N-terminal stretch at 1 to 19 (MRNIIYFILSLLFSVTSYA) is a signal peptide.

The protein belongs to the TolB family. As to quaternary structure, the Tol-Pal system is composed of five core proteins: the inner membrane proteins TolA, TolQ and TolR, the periplasmic protein TolB and the outer membrane protein Pal. They form a network linking the inner and outer membranes and the peptidoglycan layer.

Its subcellular location is the periplasm. Part of the Tol-Pal system, which plays a role in outer membrane invagination during cell division and is important for maintaining outer membrane integrity. This Rickettsia peacockii (strain Rustic) protein is Tol-Pal system protein TolB.